Reading from the N-terminus, the 412-residue chain is ATP phosphoribosyltransferase regulatory subunit (412 aa).

Belongs to the class-II aminoacyl-tRNA synthetase family. HisZ subfamily. Heteromultimer composed of HisG and HisZ subunits.

The protein resides in the cytoplasm. It functions in the pathway amino-acid biosynthesis; L-histidine biosynthesis; L-histidine from 5-phospho-alpha-D-ribose 1-diphosphate: step 1/9. Functionally, required for the first step of histidine biosynthesis. May allow the feedback regulation of ATP phosphoribosyltransferase activity by histidine. This chain is ATP phosphoribosyltransferase regulatory subunit, found in Dehalococcoides mccartyi (strain ATCC BAA-2100 / JCM 16839 / KCTC 5957 / BAV1).